Consider the following 210-residue polypeptide: Uracil phosphoribosyltransferase (210 aa).

Residues arginine 78, arginine 103, and aspartate 130–threonine 138 each bind 5-phospho-alpha-D-ribose 1-diphosphate. Residues isoleucine 193 and glycine 198 to alanine 200 each bind uracil. 5-phospho-alpha-D-ribose 1-diphosphate is bound at residue aspartate 199.

Belongs to the UPRTase family. It depends on Mg(2+) as a cofactor.

It catalyses the reaction UMP + diphosphate = 5-phospho-alpha-D-ribose 1-diphosphate + uracil. It functions in the pathway pyrimidine metabolism; UMP biosynthesis via salvage pathway; UMP from uracil: step 1/1. Allosterically activated by GTP. In terms of biological role, catalyzes the conversion of uracil and 5-phospho-alpha-D-ribose 1-diphosphate (PRPP) to UMP and diphosphate. In Stenotrophomonas maltophilia (strain K279a), this protein is Uracil phosphoribosyltransferase.